A 62-amino-acid chain; its full sequence is Photosystem II reaction center protein Z (62 aa).

2 helical membrane-spanning segments follow: residues 8-28 (SVFA…VALA) and 41-61 (FSGV…NSFI).

This sequence belongs to the PsbZ family. In terms of assembly, PSII is composed of 1 copy each of membrane proteins PsbA, PsbB, PsbC, PsbD, PsbE, PsbF, PsbH, PsbI, PsbJ, PsbK, PsbL, PsbM, PsbT, PsbY, PsbZ, Psb30/Ycf12, at least 3 peripheral proteins of the oxygen-evolving complex and a large number of cofactors. It forms dimeric complexes.

Its subcellular location is the plastid. It is found in the chloroplast thylakoid membrane. May control the interaction of photosystem II (PSII) cores with the light-harvesting antenna, regulates electron flow through the 2 photosystem reaction centers. PSII is a light-driven water plastoquinone oxidoreductase, using light energy to abstract electrons from H(2)O, generating a proton gradient subsequently used for ATP formation. The chain is Photosystem II reaction center protein Z from Cryptomeria japonica (Japanese cedar).